Consider the following 110-residue polypeptide: UPF0145 protein Blon_0093/BLIJ_0092 (110 aa).

This sequence belongs to the UPF0145 family.

In Bifidobacterium longum subsp. infantis (strain ATCC 15697 / DSM 20088 / JCM 1222 / NCTC 11817 / S12), this protein is UPF0145 protein Blon_0093/BLIJ_0092.